A 141-amino-acid chain; its full sequence is Large ribosomal subunit protein uL11 (141 aa).

Belongs to the universal ribosomal protein uL11 family. As to quaternary structure, part of the ribosomal stalk of the 50S ribosomal subunit. Interacts with L10 and the large rRNA to form the base of the stalk. L10 forms an elongated spine to which L12 dimers bind in a sequential fashion forming a multimeric L10(L12)X complex. One or more lysine residues are methylated.

In terms of biological role, forms part of the ribosomal stalk which helps the ribosome interact with GTP-bound translation factors. The sequence is that of Large ribosomal subunit protein uL11 from Desulfotalea psychrophila (strain LSv54 / DSM 12343).